The chain runs to 192 residues: Rho-related protein racC (192 aa).

Residue Gly13–Thr20 coordinates GTP. The Effector region motif lies at Tyr35 to Tyr43. GTP-binding positions include Asp60–Gln64 and Thr118–Asp121. Residue Cys189 is modified to Cysteine methyl ester. The S-geranylgeranyl cysteine moiety is linked to residue Cys189. Positions Ile190–Met192 are cleaved as a propeptide — removed in mature form.

This sequence belongs to the small GTPase superfamily. Rho family. As to quaternary structure, interacts with pakB.

The protein localises to the cell membrane. The polypeptide is Rho-related protein racC (racC) (Dictyostelium discoideum (Social amoeba)).